The chain runs to 446 residues: Asparagine--tRNA ligase (446 aa).

The protein belongs to the class-II aminoacyl-tRNA synthetase family. In terms of assembly, homodimer.

It localises to the cytoplasm. The catalysed reaction is tRNA(Asn) + L-asparagine + ATP = L-asparaginyl-tRNA(Asn) + AMP + diphosphate + H(+). The polypeptide is Asparagine--tRNA ligase (Sorangium cellulosum (strain So ce56) (Polyangium cellulosum (strain So ce56))).